A 142-amino-acid chain; its full sequence is HTH-type transcriptional regulator MntR (142 aa).

The region spanning 1-63 (MPTPSMEDYI…YEKYRGLVLT (63 aa)) is the HTH dtxR-type domain. Asp-8, Glu-11, His-77, Glu-99, Glu-102, and His-103 together coordinate Mn(2+).

The protein belongs to the DtxR/MntR family. As to quaternary structure, homodimer.

The protein resides in the cytoplasm. Its activity is regulated as follows. DNA binding is strongly activated by Mn(2+). In terms of biological role, central regulator of manganese homeostasis. The protein is HTH-type transcriptional regulator MntR of Bacillus cereus (strain B4264).